Reading from the N-terminus, the 857-residue chain is DNA mismatch repair protein MutS (857 aa).

Glycine 621–serine 628 serves as a coordination point for ATP.

Belongs to the DNA mismatch repair MutS family.

In terms of biological role, this protein is involved in the repair of mismatches in DNA. It is possible that it carries out the mismatch recognition step. This protein has a weak ATPase activity. The polypeptide is DNA mismatch repair protein MutS (Francisella tularensis subsp. tularensis (strain SCHU S4 / Schu 4)).